Reading from the N-terminus, the 1671-residue chain is DNA polymerase (1671 aa).

Residues 135 to 326 form a 3'-5' exonuclease region; sequence LKMLAFDIET…KVTYELGKEF (192 aa). One can recognise a DOD-type homing endonuclease 1 domain in the interval 524–665; that stretch reads LAGILLAEGT…VSKLLSQLGI (142 aa). Residues C788 and C802 are joined by a disulfide bond. One can recognise a DOD-type homing endonuclease 2 domain in the interval 1132–1265; it reads LLGYYVSEGY…LVLLLNSVGV (134 aa). Residues C1403 and C1406 are joined by a disulfide bond.

It belongs to the DNA polymerase type-B family. In terms of processing, undergoes a protein self splicing that involves a post-translational excision of the intervening region (intein) followed by peptide ligation.

The enzyme catalyses DNA(n) + a 2'-deoxyribonucleoside 5'-triphosphate = DNA(n+1) + diphosphate. Its function is as follows. Has high processivity, a high polymerization rate and high fidelity. In addition to polymerase activity, also exhibits 3' to 5' exonuclease activity. In terms of biological role, intein encoded endonucleases are thought to mediate intein mobility by site-specific recombination initiated by endonuclease cleavage at the 'homing site' in genes that lack the intein. Upon expression in E.coli PI-PkoI recognizes the minimal sequence 5'-GATTTTAGATCCCTGTACC-3' and cuts after T-10. PI-PkoII recognizes the minimal sequence 5'-CAGCTACTACGGTTAC-3' and cuts after C-10. Given the high intracellular K(+) content (&gt;0.5 M), PI-PkoII is probably more active than PI-PkoI in vivo. This Thermococcus kodakarensis (strain ATCC BAA-918 / JCM 12380 / KOD1) (Pyrococcus kodakaraensis (strain KOD1)) protein is DNA polymerase (pol).